The following is a 117-amino-acid chain: Large ribosomal subunit protein uL18 (117 aa).

The protein belongs to the universal ribosomal protein uL18 family. In terms of assembly, part of the 50S ribosomal subunit; part of the 5S rRNA/L5/L18/L25 subcomplex. Contacts the 5S and 23S rRNAs.

In terms of biological role, this is one of the proteins that bind and probably mediate the attachment of the 5S RNA into the large ribosomal subunit, where it forms part of the central protuberance. The chain is Large ribosomal subunit protein uL18 from Pasteurella multocida (strain Pm70).